A 467-amino-acid chain; its full sequence is 3-isopropylmalate dehydratase large subunit (467 aa).

[4Fe-4S] cluster is bound by residues Cys-347, Cys-407, and Cys-410.

This sequence belongs to the aconitase/IPM isomerase family. LeuC type 1 subfamily. As to quaternary structure, heterodimer of LeuC and LeuD. It depends on [4Fe-4S] cluster as a cofactor.

The enzyme catalyses (2R,3S)-3-isopropylmalate = (2S)-2-isopropylmalate. It functions in the pathway amino-acid biosynthesis; L-leucine biosynthesis; L-leucine from 3-methyl-2-oxobutanoate: step 2/4. Functionally, catalyzes the isomerization between 2-isopropylmalate and 3-isopropylmalate, via the formation of 2-isopropylmaleate. This chain is 3-isopropylmalate dehydratase large subunit, found in Picosynechococcus sp. (strain ATCC 27264 / PCC 7002 / PR-6) (Agmenellum quadruplicatum).